A 748-amino-acid polypeptide reads, in one-letter code: Cysteine--tRNA ligase, cytoplasmic (748 aa).

The tract at residues 1–25 is disordered; it reads MADSSGQQGKGRRVQPQWSPPAGTQ. N-acetylalanine is present on Ala-2. Ser-19 carries the post-translational modification Phosphoserine. Cys-55 provides a ligand contact to Zn(2+). Gly-56 serves as a coordination point for L-cysteine. Positions 57–67 match the 'HIGH' region motif; sequence PTVYDASHMGH. Arg-79 bears the Phosphoserine mark. Thr-96 lines the L-cysteine pocket. The short motif at 101–104 is the 'KIIK' region element; sequence KIIK. Phosphoserine occurs at positions 305 and 307. Residues Cys-348, His-373, and Glu-377 each contribute to the Zn(2+) site. L-cysteine is bound at residue His-373. A 'KMSKS' region motif is present at residues 406-410; it reads KMSKS. Residue Lys-409 coordinates ATP. Lys-503 is modified (N6-acetyllysine). Residues 653–679 show a composition bias toward basic and acidic residues; it reads EKRRVEEEKRKKKEEAARRKQEQEAAK. Positions 653–686 are disordered; sequence EKRRVEEEKRKKKEEAARRKQEQEAAKLAKMKIP. Residue Ser-746 is modified to Phosphoserine.

The protein belongs to the class-I aminoacyl-tRNA synthetase family. As to quaternary structure, homodimer. It depends on Zn(2+) as a cofactor.

It is found in the cytoplasm. The enzyme catalyses tRNA(Cys) + L-cysteine + ATP = L-cysteinyl-tRNA(Cys) + AMP + diphosphate. Its function is as follows. Catalyzes the ATP-dependent ligation of cysteine to tRNA(Cys). In Homo sapiens (Human), this protein is Cysteine--tRNA ligase, cytoplasmic.